The chain runs to 1421 residues: Envelopment polyprotein (1421 aa).

Positions 1 to 20 (MEGSYWWLSLLALLAWGANG) are cleaved as a signal peptide. Residues 21-479 (ESTSPAETSP…CRMSHRPRTC (459 aa)) lie on the Lumenal side of the membrane. Over residues 22-31 (STSPAETSPA) the composition is skewed to low complexity. The disordered stretch occupies residues 22–42 (STSPAETSPAPTTPNPPVVNP). 2 N-linked (GlcNAc...) asparagine; by host glycosylation sites follow: asparagine 97 and asparagine 346. The chain crosses the membrane as a helical span at residues 480–500 (LALFIWLGAGYGITCIAGYMV). Residues 501–610 (YYAILALSML…KLGTLLKRLS (110 aa)) are Cytoplasmic-facing. A helical transmembrane segment spans residues 611-631 (WVTVFLCLFLTAIAPVQGQVT). The Lumenal portion of the chain corresponds to 632 to 643 (TSPVLPSNQSTE). Asparagine 639 carries N-linked (GlcNAc...) asparagine; by host glycosylation. Residues 644 to 664 (CTLLPPPVFLIFSAVLMSKTL) traverse the membrane as a helical segment. The Cytoplasmic segment spans residues 665 to 708 (KRMGPVNKVGAAGHSARRTNSPKNLYKSKQIANTKSGPREPRRR). The helical transmembrane segment at 709–729 (VVVKALLILTASSALQSIHLA) threads the bilayer. The propeptide occupies 722–776 (ALQSIHLAQAFDSGSLPEGAWEEEMQLVQGCNQECSLEEDECSCPDGQSMTRKLL). Over 730-1330 (QAFDSGSLPE…GSFFRNYLGS (601 aa)) the chain is Lumenal. 2 cysteine pairs are disulfide-bonded: cysteine 901-cysteine 1096 and cysteine 929-cysteine 934. N-linked (GlcNAc...) asparagine; by host glycosylation is found at asparagine 1081 and asparagine 1299. The helical transmembrane segment at 1331 to 1351 (ITLGIVLTLLPVAVVLLFFCY) threads the bilayer. Residues 1352–1421 (GDKLFKLCSC…GKGKNYKELV (70 aa)) lie on the Cytoplasmic side of the membrane.

Belongs to the nairovirus envelope glycoprotein family. As to quaternary structure, heterodimer with glycoprotein C; in prefusion state. In terms of assembly, heterodimer with glycoprotein N; in prefusion state. Homotrimeric; in postfusion state. In terms of processing, specific enzymatic cleavage by host MBTPS1/S1P/SKI-1 endopeptidase yield glycoprotein N. Specific enzymatic cleavages by host furin-like protease and MBTPS1/S1P endopeptidase yield GP38. Glycosylated.

The protein localises to the host endoplasmic reticulum membrane. It is found in the virion membrane. The protein resides in the host Golgi apparatus membrane. Functionally, glycoprotein N and glycoprotein C interact with each other and are present at the surface of the virion. Glycoprotein N probably locks the Gn-Gc complex in a prefusion state. Glycoprotein N and glycoprotein C are able to attach the virion to host cell receptors. This attachment induces virion internalization predominantly through clathrin-dependent endocytosis. Its function is as follows. Glycoprotein C and glycoprotein N interact with each other and are present at the surface of the virion. The spikes at the surface of the virion are formed by an N-terminal extension of glycoprotein C. Glycoprotein N and glycoprotein C are able to attach the virion to host cell receptors. This attachment induces virion internalization predominantly through clathrin-dependent endocytosis. Class II fusion protein that promotes fusion of viral membrane with host endosomal membrane after endocytosis of the virion. Exposure to potassium is necessary for the conformational change leading to fusion. This chain is Envelopment polyprotein (GP), found in Ixodes.